The following is a 131-amino-acid chain: Phosphoribosyl-AMP cyclohydrolase (131 aa).

A Mg(2+)-binding site is contributed by D78. C79 provides a ligand contact to Zn(2+). Positions 80 and 82 each coordinate Mg(2+). Zn(2+)-binding residues include C96 and C103.

This sequence belongs to the PRA-CH family. Homodimer. It depends on Mg(2+) as a cofactor. Requires Zn(2+) as cofactor.

Its subcellular location is the cytoplasm. It catalyses the reaction 1-(5-phospho-beta-D-ribosyl)-5'-AMP + H2O = 1-(5-phospho-beta-D-ribosyl)-5-[(5-phospho-beta-D-ribosylamino)methylideneamino]imidazole-4-carboxamide. The protein operates within amino-acid biosynthesis; L-histidine biosynthesis; L-histidine from 5-phospho-alpha-D-ribose 1-diphosphate: step 3/9. Functionally, catalyzes the hydrolysis of the adenine ring of phosphoribosyl-AMP. In Thioalkalivibrio sulfidiphilus (strain HL-EbGR7), this protein is Phosphoribosyl-AMP cyclohydrolase.